The primary structure comprises 274 residues: CDC48-associated ubiquitin-like/zinc finger protein 1 (274 aa).

The segment at 12-58 (LDVGKHCAYCRQLDFLPFHCSFCNEDFCSNHRLKEDHHCRWLLEHEE) adopts an AN1-type zinc-finger fold. Zn(2+) contacts are provided by Cys-18, Cys-21, Cys-31, Cys-34, Cys-39, His-42, His-48, and Cys-50. A ubiquitin-like region spans residues 170-266 (NRIYIWCYLV…KDLDTLYLVH (97 aa)). The residue at position 273 (Ser-273) is a Phosphoserine.

Interacts (via its ubiquitin-like domain) with CDC48 (via N-terminus). Associates with the 26S proteasome. Specifically interacts with the regulatory particle (RP) subunit RPN2. Exposure to arsenite, a known inducer of protein misfolding resulting in accumulation of polyubiquitinated conjugates, enhances the association with the proteoasome. Binds to ubiquitinated proteins conjugated to a 4 or more molecule ubiquitin chain. Binding to ubiquitinated proteins is zinc-dependent.

Its subcellular location is the cytoplasm. It localises to the nucleus. Promotes efficient arsenite-induced clearance of stress granules (SGs). May have a role in the ubiquitin-proteasome system (UPS) protecting cells from metalloid-induced proteotoxicity. In Saccharomyces cerevisiae (strain ATCC 204508 / S288c) (Baker's yeast), this protein is CDC48-associated ubiquitin-like/zinc finger protein 1.